The primary structure comprises 142 residues: Large ribosomal subunit protein uL11 (142 aa).

The protein belongs to the universal ribosomal protein uL11 family. As to quaternary structure, part of the ribosomal stalk of the 50S ribosomal subunit. Interacts with L10 and the large rRNA to form the base of the stalk. L10 forms an elongated spine to which L12 dimers bind in a sequential fashion forming a multimeric L10(L12)X complex. Post-translationally, one or more lysine residues are methylated.

Functionally, forms part of the ribosomal stalk which helps the ribosome interact with GTP-bound translation factors. This chain is Large ribosomal subunit protein uL11, found in Rhodospirillum rubrum (strain ATCC 11170 / ATH 1.1.1 / DSM 467 / LMG 4362 / NCIMB 8255 / S1).